Here is a 211-residue protein sequence, read N- to C-terminus: uncharacterized protein (211 aa).

Positions 54, 56, 58, 59, 129, 148, and 189 each coordinate Zn(2+).

Belongs to the metallo-beta-lactamase superfamily. Glyoxalase II family. Requires Zn(2+) as cofactor.

This is an uncharacterized protein from Aquifex aeolicus (strain VF5).